A 548-amino-acid chain; its full sequence is 5-epi-aristolochene synthase 2 (548 aa).

Residues aspartate 301, aspartate 305, aspartate 444, threonine 448, and glutamate 452 each coordinate Mg(2+). A DDXXD motif motif is present at residues 301 to 305 (DDTFD).

This sequence belongs to the terpene synthase family. Monomer. Mg(2+) serves as cofactor. As to expression, expressed in roots, but not in shoots.

It localises to the cytoplasm. The catalysed reaction is (2E,6E)-farnesyl diphosphate = (+)-5-epi-aristolochene + diphosphate. It functions in the pathway secondary metabolite biosynthesis; terpenoid biosynthesis. Catalyzes the cyclization of trans,trans-farnesyl diphosphate (FPP) to the bicyclic intermediate 5-epi-aristolochene, initial step in the conversion of FPP to the sesquiterpenoid antifungal phytoalexin capsidiol. Produces germacrene A as an enzyme-bound intermediate that is not released by the enzyme, but is further cyclized to produce the bicyclic 5-epi-aristolochene. This Nicotiana attenuata (Coyote tobacco) protein is 5-epi-aristolochene synthase 2.